We begin with the raw amino-acid sequence, 346 residues long: MADDRKAALDAALKKIEKNYGKGSIMKLGEKIDQQISTIPSGSLALDVALGIGGYPRGRIIEVYGPESSGKTTVALHAIAEVQKNGGTAAFIDAEHALDPQYAQKLGVNIDELLLSQPDTGEQGLEIADALVSSGAVDIVVIDSVAALVPRAEIDGEMGDSHVGLQARLMSQALRKLSGSINKTKTIAIFINQIREKVGVMFGNPEITPGGRALKFYATIRLEVRRAEQLKQGTDIVGNRTKIKVVKNKVAPPFKIAEVDVMYGLGISQEGELLDMAVEKDIVDKSGAWYSYKEDRIGQGRENAKIYMSNHPEMMAEVSTLVRAAYGIGEPVDVPQEAQEELPLDE.

Residue 65 to 72 (GPESSGKT) participates in ATP binding.

It belongs to the RecA family.

The protein resides in the cytoplasm. Functionally, can catalyze the hydrolysis of ATP in the presence of single-stranded DNA, the ATP-dependent uptake of single-stranded DNA by duplex DNA, and the ATP-dependent hybridization of homologous single-stranded DNAs. It interacts with LexA causing its activation and leading to its autocatalytic cleavage. In Enterococcus mundtii, this protein is Protein RecA.